Here is a 347-residue protein sequence, read N- to C-terminus: Protein RecA (347 aa).

64 to 71 (GPESSGKT) serves as a coordination point for ATP.

This sequence belongs to the RecA family.

The protein resides in the cytoplasm. Can catalyze the hydrolysis of ATP in the presence of single-stranded DNA, the ATP-dependent uptake of single-stranded DNA by duplex DNA, and the ATP-dependent hybridization of homologous single-stranded DNAs. It interacts with LexA causing its activation and leading to its autocatalytic cleavage. This chain is Protein RecA, found in Bartonella tribocorum (strain CIP 105476 / IBS 506).